Here is a 203-residue protein sequence, read N- to C-terminus: SOSS complex subunit B1 (203 aa).

Positions isoleucine 22–leucine 92 form a DNA-binding region, OB. Residues proline 111–arginine 203 are disordered. Positions alanine 117–glutamate 128 are enriched in polar residues. Over residues serine 129–serine 140 the composition is skewed to low complexity. The span at glutamate 149 to histidine 182 shows a compositional bias: polar residues.

The protein belongs to the SOSS-B family. SOSS-B1 subfamily. In terms of assembly, component of the SOSS complex, composed of soss-b (soss-b1/nabp2 or soss-b2/nabp1), soss-a/ints3 and soss-c/inip. SOSS complexes containing soss-b1/nabp2 are more abundant than complexes containing soss-b2/nabp1.

It is found in the nucleus. Component of the SOSS complex, a multiprotein complex that functions downstream of the MRN complex to promote DNA repair and G2/M checkpoint. In the SOSS complex, acts as a sensor of single-stranded DNA that binds to single-stranded DNA. The SOSS complex associates with DNA lesions and influences diverse endpoints in the cellular DNA damage response including cell-cycle checkpoint activation, recombinational repair and maintenance of genomic stability. Required for efficient homologous recombination-dependent repair of double-strand breaks (DSBs). This chain is SOSS complex subunit B1 (nabp2), found in Xenopus tropicalis (Western clawed frog).